Consider the following 69-residue polypeptide: U2-agatoxin-Ao1w (69 aa).

Positions 1–20 (MRAIISLLLISAMVFSMIEA) are cleaved as a signal peptide. The propeptide occupies 21-34 (VPVEEGLQLFEGER). 3 disulfides stabilise this stretch: Cys37–Cys53, Cys44–Cys58, and Cys52–Cys68.

This sequence belongs to the neurotoxin 01 (U2-agtx) family. In terms of tissue distribution, expressed by the venom gland.

Its subcellular location is the secreted. Its function is as follows. Insect active toxin causing rapid but reversible paralysis in crickets. No activity shown in mammals. Does not show effect on mammalian voltage-gated calcium channels. In Agelena orientalis (Funnel-web spider), this protein is U2-agatoxin-Ao1w.